We begin with the raw amino-acid sequence, 292 residues long: Small ribosomal subunit biogenesis GTPase RsgA (292 aa).

Positions 64-221 (RSELFRPAVA…LVDTPGFSSL (158 aa)) constitute a CP-type G domain. GTP is bound by residues 113-116 (NKMD) and 164-172 (GPSGVGKST). The Zn(2+) site is built by Cys-245, Cys-250, His-252, and Cys-258.

Belongs to the TRAFAC class YlqF/YawG GTPase family. RsgA subfamily. As to quaternary structure, monomer. Associates with 30S ribosomal subunit, binds 16S rRNA. The cofactor is Zn(2+).

Its subcellular location is the cytoplasm. One of several proteins that assist in the late maturation steps of the functional core of the 30S ribosomal subunit. Helps release RbfA from mature subunits. May play a role in the assembly of ribosomal proteins into the subunit. Circularly permuted GTPase that catalyzes slow GTP hydrolysis, GTPase activity is stimulated by the 30S ribosomal subunit. The polypeptide is Small ribosomal subunit biogenesis GTPase RsgA (Clostridium botulinum (strain 657 / Type Ba4)).